The primary structure comprises 112 residues: Nucleoid-associated protein FTH_1374 (112 aa).

Residues 1 to 27 (MNFDMSKLMQQAQKMQEQMKKAQQERE) are disordered. Positions 17-27 (EQMKKAQQERE) are enriched in basic and acidic residues.

It belongs to the YbaB/EbfC family. As to quaternary structure, homodimer.

It localises to the cytoplasm. The protein localises to the nucleoid. Its function is as follows. Binds to DNA and alters its conformation. May be involved in regulation of gene expression, nucleoid organization and DNA protection. In Francisella tularensis subsp. holarctica (strain OSU18), this protein is Nucleoid-associated protein FTH_1374.